The following is a 206-amino-acid chain: Probable glutathione S-transferase 6 (206 aa).

Residues 2 to 79 (VHYKLVYFPL…YLAREFGIAG (78 aa)) enclose the GST N-terminal domain. Glutathione-binding positions include Tyr-8, Trp-39, Lys-43, 49–51 (GQL), and 63–64 (QS). In terms of domain architecture, GST C-terminal spans 81-206 (NDTEAAEVDA…YIANRPDYPF (126 aa)).

Belongs to the GST superfamily. Sigma family.

It catalyses the reaction RX + glutathione = an S-substituted glutathione + a halide anion + H(+). Its function is as follows. Conjugation of reduced glutathione to a wide number of exogenous and endogenous hydrophobic electrophiles. The polypeptide is Probable glutathione S-transferase 6 (gst-6) (Caenorhabditis elegans).